The sequence spans 220 residues: GTP cyclohydrolase 1 (220 aa).

Residues C109, H112, and C180 each contribute to the Zn(2+) site.

The protein belongs to the GTP cyclohydrolase I family. As to quaternary structure, homomer.

The catalysed reaction is GTP + H2O = 7,8-dihydroneopterin 3'-triphosphate + formate + H(+). The protein operates within cofactor biosynthesis; 7,8-dihydroneopterin triphosphate biosynthesis; 7,8-dihydroneopterin triphosphate from GTP: step 1/1. The sequence is that of GTP cyclohydrolase 1 from Edwardsiella ictaluri (strain 93-146).